The chain runs to 468 residues: Flavin-containing monooxygenase FMO GS-OX-like 1 (468 aa).

Residue 16 to 21 participates in FAD binding; it reads GLGAAG. 211 to 216 is a binding site for NADP(+); the sequence is GSQASG.

Belongs to the FMO family. The cofactor is FAD.

Catalyzes the conversion of methylthioalkyl glucosinolates of any chain length into methylsulfinylalkyl glucosinolates. This is Flavin-containing monooxygenase FMO GS-OX-like 1 from Arabidopsis thaliana (Mouse-ear cress).